Here is a 295-residue protein sequence, read N- to C-terminus: Trimeric intracellular cation channel type A (295 aa).

At 1-18 (MELLSALSLDDLAASFSK) the chain is on the lumenal side. Residues 19–39 (LPVFPLFDVAYYIISILYLKY) traverse the membrane as a helical segment. Over 40–51 (EPGAVDLSKRSP) the chain is Cytoplasmic. The helical transmembrane segment at 52–72 (VASWLCAMLYCFGSYILADVL) threads the bilayer. The Lumenal portion of the chain corresponds to 73–84 (LGESPIHYFSNN). Gly-74 is a binding site for Ca(2+). The chain crosses the membrane as a helical span at residues 85–105 (ANILLASAVWYLTFFCPLNIF). Residues 106 to 144 (YKIVSFLPVKLVLVGMKEVVRVRKIAMGIHHAHHHYHHG) lie on the Cytoplasmic side of the membrane. Positions 122 and 126 each coordinate a 1,2-diacyl-sn-glycero-3-phospho-(1D-myo-inositol-4,5-bisphosphate). Residues 145–165 (WVIMVLIGWVKGSGVALMSNL) form a helical membrane-spanning segment. The Lumenal segment spans residues 166–178 (EQLLRGVWKPETN). Residues 179-199 (EILHMSFPTKASLYGAILFTL) form a helical membrane-spanning segment. Residues 200–201 (QQ) are Cytoplasmic-facing. Residues 202-222 (AHWLPISKAYLIFFFTLFMAV) traverse the membrane as a helical segment. At 223-233 (CKIYMTATHSH) the chain is on the lumenal side. Residues 234–254 (GSPFAIFESGICYVLFAAANG) traverse the membrane as a helical segment. The Cytoplasmic portion of the chain corresponds to 255-295 (DHDDHGNHHHHHDDHDVSHSAGKSKEEHNEGTRKRKTKKAE). Residues 258–295 (DHGNHHHHHDDHDVSHSAGKSKEEHNEGTRKRKTKKAE) are disordered. The segment covering 267–286 (DDHDVSHSAGKSKEEHNEGT) has biased composition (basic and acidic residues).

Belongs to the TMEM38 family. In terms of assembly, homotrimer; conformation seems to be controled by binding to diacylglycerol (DAG).

The protein resides in the sarcoplasmic reticulum membrane. Its subcellular location is the nucleus membrane. The catalysed reaction is K(+)(in) = K(+)(out). With respect to regulation, channel activity is activated by a change of voltage within the sarcoplasmic reticulum lumen and blocked by luminal high Ca(2+) levels. Functionally, intracellular monovalent cation channel required for maintenance of rapid intracellular calcium release. Acts as a potassium counter-ion channel that functions in synchronization with calcium release from intracellular stores. Opened by a change of voltage within the sarcoplasmic reticulum lumen. The polypeptide is Trimeric intracellular cation channel type A (tmem38a) (Xenopus laevis (African clawed frog)).